We begin with the raw amino-acid sequence, 163 residues long: D-aminoacyl-tRNA deacylase (163 aa).

Residues 141 to 142 carry the Gly-cisPro motif, important for rejection of L-amino acids motif; it reads GP.

The protein belongs to the DTD family. In terms of assembly, homodimer.

Its subcellular location is the cytoplasm. The catalysed reaction is glycyl-tRNA(Ala) + H2O = tRNA(Ala) + glycine + H(+). The enzyme catalyses a D-aminoacyl-tRNA + H2O = a tRNA + a D-alpha-amino acid + H(+). Functionally, an aminoacyl-tRNA editing enzyme that deacylates mischarged D-aminoacyl-tRNAs. Also deacylates mischarged glycyl-tRNA(Ala), protecting cells against glycine mischarging by AlaRS. Acts via tRNA-based rather than protein-based catalysis; rejects L-amino acids rather than detecting D-amino acids in the active site. By recycling D-aminoacyl-tRNA to D-amino acids and free tRNA molecules, this enzyme counteracts the toxicity associated with the formation of D-aminoacyl-tRNA entities in vivo and helps enforce protein L-homochirality. This chain is D-aminoacyl-tRNA deacylase, found in Neisseria gonorrhoeae (strain ATCC 700825 / FA 1090).